A 1355-amino-acid polypeptide reads, in one-letter code: Probable aldehyde oxidase 2 (1355 aa).

Positions 9–96 (RPVVVTVNGE…HCAVTTSEGI (88 aa)) constitute a 2Fe-2S ferredoxin-type domain. Residues cysteine 48, cysteine 53, cysteine 56, and cysteine 78 each coordinate [2Fe-2S] cluster. In terms of domain architecture, FAD-binding PCMH-type spans 244–422 (VAVTGDGWFH…VSISIPDWGS (179 aa)). The segment at 544–577 (PENANVPNGSCTNGTANGSANSSPEKHSNVDSSD) is disordered. Over residues 548-566 (NVPNGSCTNGTANGSANSS) the composition is skewed to polar residues.

Belongs to the xanthine dehydrogenase family. In terms of assembly, aldehyde oxidases (AO) are homodimers and heterodimers of AO subunits. [2Fe-2S] cluster serves as cofactor. Requires FAD as cofactor. Mo-molybdopterin is required as a cofactor.

It carries out the reaction an aldehyde + O2 + H2O = a carboxylate + H2O2 + H(+). This chain is Probable aldehyde oxidase 2, found in Oryza sativa subsp. japonica (Rice).